The chain runs to 56 residues: Putative zinc-binding protein YnfU (56 aa).

The Zn(2+) site is built by Cys19, Cys22, Cys41, and Cys44.

Requires Zn(2+) as cofactor.

The sequence is that of Putative zinc-binding protein YnfU from Escherichia coli (strain K12).